We begin with the raw amino-acid sequence, 710 residues long: Aminopeptidase P2 (710 aa).

Residues 1–79 (MIPLTLSSPS…IRKAQTKVVV (79 aa)) constitute a chloroplast transit peptide. A peptide is bound by residues arginine 147 and histidine 486. Residues aspartate 506, aspartate 517, and histidine 580 each coordinate Mn(2+). 3 residues coordinate a peptide: histidine 580, histidine 589, and glutamate 614. Mn(2+) is bound by residues glutamate 614 and glutamate 628.

The protein belongs to the peptidase M24B family. As to quaternary structure, homodimer. Mn(2+) serves as cofactor.

The protein resides in the plastid. It localises to the chloroplast. The enzyme catalyses Release of any N-terminal amino acid, including proline, that is linked to proline, even from a dipeptide or tripeptide.. In terms of biological role, catalyzes the removal of a penultimate prolyl residue from the N-termini of peptides, such as Arg-Pro-Pro. The polypeptide is Aminopeptidase P2 (Arabidopsis thaliana (Mouse-ear cress)).